The sequence spans 238 residues: Dof zinc finger protein MNB1A (238 aa).

Residues 1–13 (MQEASSAAAAGAE) show a composition bias toward low complexity. Residues 1 to 48 (MQEASSAAAAGAEPGRRAAQHQFAGVDLRRPKGYAAPAPAPAVGEGDP) form a disordered region. The Dof-type zinc finger occupies 47–101 (DPCPRCASRDTKFCYYNNYNTSQPRHFCKGCRRYWTKGGTLRNVPVGGGTRKKPS). Zn(2+) is bound by residues Cys49, Cys52, Cys74, and Cys77. Residues 85 to 155 (GTLRNVPVGG…TATTTTTTSE (71 aa)) form a disordered region. Over residues 119–130 (PKKKPASKKRRV) the composition is skewed to basic residues. A compositionally biased stretch (low complexity) spans 138 to 155 (ATAADPGKTATTTTTTSE).

In terms of tissue distribution, expressed in all tissues examined.

It is found in the nucleus. Its function is as follows. Transcription factor that binds specifically to a 5'-AA[AG]G-3' consensus core sequence at the MNF1-binding site. The protein is Dof zinc finger protein MNB1A (MNB1A) of Zea mays (Maize).